Consider the following 359-residue polypeptide: 3-dehydroquinate synthase (359 aa).

Residues 71 to 76 (DGEAYK), 105 to 109 (GVVGD), 129 to 130 (TT), Lys-142, and Lys-151 each bind NAD(+). The Zn(2+) site is built by Glu-184, His-247, and His-264.

This sequence belongs to the sugar phosphate cyclases superfamily. Dehydroquinate synthase family. It depends on Co(2+) as a cofactor. Zn(2+) is required as a cofactor. NAD(+) serves as cofactor.

It is found in the cytoplasm. The enzyme catalyses 7-phospho-2-dehydro-3-deoxy-D-arabino-heptonate = 3-dehydroquinate + phosphate. The protein operates within metabolic intermediate biosynthesis; chorismate biosynthesis; chorismate from D-erythrose 4-phosphate and phosphoenolpyruvate: step 2/7. In terms of biological role, catalyzes the conversion of 3-deoxy-D-arabino-heptulosonate 7-phosphate (DAHP) to dehydroquinate (DHQ). This is 3-dehydroquinate synthase from Burkholderia cenocepacia (strain HI2424).